Consider the following 338-residue polypeptide: MSVSGLPFDDFRTLLRELPGPDARALAAARERDAQLTKPPGALGRLEEIAFWLAAWTGRAPAVNRPLVAIFAGNHGVTRHGITPFPPAVTQQMVENFAAGGAAINQICVAHDLGLKVFDLALDYPTGDITEEAALSERDCAATMAFGMEAIAGGTDLLCIGEMGIGNTTIAAAINYALYGGSARDWVGPGTGSEGDMLERKIAAVEKAVALHSDHLDDPLEIMRRLGGREIAAMAGAILAARIERIPVLIDGYVATAAAAILKAANPAALDHCLIGHVSAEPGHLRSIEMLGKTPLLALGMRLGEGTGAALAAGIVKAAAACHSGMATFAQAGVSGKH.

The active-site Proton acceptor is E305.

The protein belongs to the CobT family.

The catalysed reaction is 5,6-dimethylbenzimidazole + nicotinate beta-D-ribonucleotide = alpha-ribazole 5'-phosphate + nicotinate + H(+). It participates in nucleoside biosynthesis; alpha-ribazole biosynthesis; alpha-ribazole from 5,6-dimethylbenzimidazole: step 1/2. Functionally, catalyzes the synthesis of alpha-ribazole-5'-phosphate from nicotinate mononucleotide (NAMN) and 5,6-dimethylbenzimidazole (DMB). This Rhizobium etli (strain ATCC 51251 / DSM 11541 / JCM 21823 / NBRC 15573 / CFN 42) protein is Nicotinate-nucleotide--dimethylbenzimidazole phosphoribosyltransferase.